A 262-amino-acid polypeptide reads, in one-letter code: tRNA (guanine-N(1)-)-methyltransferase (262 aa).

S-adenosyl-L-methionine contacts are provided by residues G113 and 137 to 142 (IGDYVL).

Belongs to the RNA methyltransferase TrmD family. In terms of assembly, homodimer.

The protein localises to the cytoplasm. The catalysed reaction is guanosine(37) in tRNA + S-adenosyl-L-methionine = N(1)-methylguanosine(37) in tRNA + S-adenosyl-L-homocysteine + H(+). In terms of biological role, specifically methylates guanosine-37 in various tRNAs. This is tRNA (guanine-N(1)-)-methyltransferase from Thermobifida fusca (strain YX).